Here is a 101-residue protein sequence, read N- to C-terminus: Apolipoprotein C-II (101 aa).

Residues 1 to 17 (MGTRFLLALCLVLLVLG) form the signal peptide. Positions 66-74 (AVDEKLRDL) are lipid binding. Residues 78-101 (STAAMSTYTGIFTDQVLSVLKGEE) are lipoprotein lipase cofactor.

The protein belongs to the apolipoprotein C2 family. In terms of processing, proapolipoprotein C-II is synthesized as a sialic acid containing glycoprotein which is subsequently desialylated prior to its proteolytic processing. Proapolipoprotein C-II, the major form found in plasma undergoes proteolytic cleavage of its N-terminal hexapeptide to generate apolipoprotein C-II, which occurs as the minor form in plasma.

The protein resides in the secreted. Its function is as follows. Component of chylomicrons, very low-density lipoproteins (VLDL), low-density lipoproteins (LDL), and high-density lipoproteins (HDL) in plasma. Plays an important role in lipoprotein metabolism as an activator of lipoprotein lipase. Both proapolipoprotein C-II and apolipoprotein C-II can activate lipoprotein lipase. This chain is Apolipoprotein C-II (APOC2), found in Chlorocebus sabaeus (Green monkey).